A 178-amino-acid chain; its full sequence is ATP-dependent protease subunit HslV (178 aa).

Residue Thr7 is part of the active site. 3 residues coordinate Na(+): Gly162, Cys165, and Thr168.

It belongs to the peptidase T1B family. HslV subfamily. As to quaternary structure, a double ring-shaped homohexamer of HslV is capped on each side by a ring-shaped HslU homohexamer. The assembly of the HslU/HslV complex is dependent on binding of ATP.

The protein localises to the cytoplasm. It catalyses the reaction ATP-dependent cleavage of peptide bonds with broad specificity.. Allosterically activated by HslU binding. Functionally, protease subunit of a proteasome-like degradation complex believed to be a general protein degrading machinery. The polypeptide is ATP-dependent protease subunit HslV (Burkholderia multivorans (strain ATCC 17616 / 249)).